A 97-amino-acid chain; its full sequence is Aspartyl/glutamyl-tRNA(Asn/Gln) amidotransferase subunit C (97 aa).

It belongs to the GatC family. Heterotrimer of A, B and C subunits.

The catalysed reaction is L-glutamyl-tRNA(Gln) + L-glutamine + ATP + H2O = L-glutaminyl-tRNA(Gln) + L-glutamate + ADP + phosphate + H(+). The enzyme catalyses L-aspartyl-tRNA(Asn) + L-glutamine + ATP + H2O = L-asparaginyl-tRNA(Asn) + L-glutamate + ADP + phosphate + 2 H(+). In terms of biological role, allows the formation of correctly charged Asn-tRNA(Asn) or Gln-tRNA(Gln) through the transamidation of misacylated Asp-tRNA(Asn) or Glu-tRNA(Gln) in organisms which lack either or both of asparaginyl-tRNA or glutaminyl-tRNA synthetases. The reaction takes place in the presence of glutamine and ATP through an activated phospho-Asp-tRNA(Asn) or phospho-Glu-tRNA(Gln). In Anaeromyxobacter dehalogenans (strain 2CP-C), this protein is Aspartyl/glutamyl-tRNA(Asn/Gln) amidotransferase subunit C.